A 597-amino-acid chain; its full sequence is Probable potassium transport system protein Kup 1 (597 aa).

10 helical membrane-spanning segments follow: residues 23 to 43 (GAWL…DSVL), 72 to 92 (LTMM…SRGT), 98 to 118 (VFGS…VVAI), 143 to 163 (ATGL…EALY), 174 to 194 (IYFT…GQGA), 226 to 246 (AVVL…TGAF), 273 to 293 (LYIP…LLLF), 303 to 323 (YGLA…IYLW), 329 to 349 (FGAV…FAAS), and 353 to 373 (FLHG…IMYT).

This sequence belongs to the HAK/KUP transporter (TC 2.A.72) family.

The protein resides in the cell membrane. The catalysed reaction is K(+)(in) + H(+)(in) = K(+)(out) + H(+)(out). Transport of potassium into the cell. Likely operates as a K(+):H(+) symporter. This is Probable potassium transport system protein Kup 1 (kup1) from Bifidobacterium longum (strain NCC 2705).